The primary structure comprises 234 residues: Peptidyl-tRNA hydrolase (234 aa).

Residue Y14 participates in tRNA binding. Catalysis depends on H19, which acts as the Proton acceptor. F64, N66, and N112 together coordinate tRNA. A disordered region spans residues T187 to D234.

The protein belongs to the PTH family. Monomer.

It is found in the cytoplasm. It catalyses the reaction an N-acyl-L-alpha-aminoacyl-tRNA + H2O = an N-acyl-L-amino acid + a tRNA + H(+). In terms of biological role, hydrolyzes ribosome-free peptidyl-tRNAs (with 1 or more amino acids incorporated), which drop off the ribosome during protein synthesis, or as a result of ribosome stalling. Catalyzes the release of premature peptidyl moieties from peptidyl-tRNA molecules trapped in stalled 50S ribosomal subunits, and thus maintains levels of free tRNAs and 50S ribosomes. The protein is Peptidyl-tRNA hydrolase of Allorhizobium ampelinum (strain ATCC BAA-846 / DSM 112012 / S4) (Agrobacterium vitis (strain S4)).